The primary structure comprises 407 residues: Serine/threonine transporter SstT (407 aa).

The next 9 membrane-spanning stretches (helical) occupy residues Gly-12–Ser-32, Leu-42–Ile-62, Ile-81–Phe-101, Ala-141–Leu-161, Val-179–Ala-199, Ile-218–Phe-238, Phe-245–Ala-267, Ile-288–Leu-308, and Ile-330–Ile-350.

This sequence belongs to the dicarboxylate/amino acid:cation symporter (DAACS) (TC 2.A.23) family.

It localises to the cell inner membrane. It catalyses the reaction L-serine(in) + Na(+)(in) = L-serine(out) + Na(+)(out). The catalysed reaction is L-threonine(in) + Na(+)(in) = L-threonine(out) + Na(+)(out). Involved in the import of serine and threonine into the cell, with the concomitant import of sodium (symport system). This chain is Serine/threonine transporter SstT, found in Campylobacter jejuni subsp. jejuni serotype O:6 (strain 81116 / NCTC 11828).